Reading from the N-terminus, the 306-residue chain is Mitochondrial substrate carrier family protein M (306 aa).

At 1–10 (MRYILNNNVE) the chain is on the mitochondrial intermembrane side. 3 Solcar repeats span residues 5–98 (LNNN…YKNI), 108–195 (LNTF…IKFY), and 207–299 (LNAS…IKKS). A helical transmembrane segment spans residues 11 to 31 (GTSALLGSTVATAFLQPFDFL). The Mitochondrial matrix portion of the chain corresponds to 32–72 (KIRLQGSGFASGGDLNKFKRVGVIDTCKNVLKNEGIKQFWR). The helical transmembrane segment at 73–89 (GSSPTIVASGIAWGTYM) threads the bilayer. Over 90–113 (HFYEAYKNILKSKYNVTQLNTFDH) the chain is Mitochondrial intermembrane. The helical transmembrane segment at 114-134 (FICAVGASATQVFITNPIFLI) threads the bilayer. The Mitochondrial matrix segment spans residues 135–163 (KTRMQLQTPGSANYYTGIFDGIKKTVKVE). The helical transmembrane segment at 164–184 (GFKGLYKGVIPSLWLTFHGGI) threads the bilayer. At 185 to 211 (QMSSYEHIKFYFSSNSGKSLDSLNASE) the chain is on the mitochondrial intermembrane side. A helical transmembrane segment spans residues 212 to 232 (IFIASSISKFLASTILYPFQV). Topologically, residues 233-278 (VKTRLQDERNIPNQNNVRVYNGTKDVIFKILKNEGIIGFYRGLVPN) are mitochondrial matrix. A helical transmembrane segment spans residues 279–296 (TLKVIPNTSITLLLYEEI). Over 297 to 306 (KKSFNYIINE) the chain is Mitochondrial intermembrane.

This sequence belongs to the mitochondrial carrier (TC 2.A.29) family.

The protein resides in the mitochondrion inner membrane. Functionally, mitochondrial solute carriers shuttle metabolites, nucleotides, and cofactors through the mitochondrial inner membrane. Transports folate across the inner membranes of mitochondria. The sequence is that of Mitochondrial substrate carrier family protein M (mcfM) from Dictyostelium discoideum (Social amoeba).